The chain runs to 188 residues: Elongation factor P (188 aa).

The residue at position 34 (Lys-34) is an N6-(3,6-diaminohexanoyl)-5-hydroxylysine.

It belongs to the elongation factor P family. May be beta-lysylated on the epsilon-amino group of Lys-34 by the combined action of EpmA and EpmB, and then hydroxylated on the C5 position of the same residue by EpmC (if this protein is present). Lysylation is critical for the stimulatory effect of EF-P on peptide-bond formation. The lysylation moiety may extend toward the peptidyltransferase center and stabilize the terminal 3-CCA end of the tRNA. Hydroxylation of the C5 position on Lys-34 may allow additional potential stabilizing hydrogen-bond interactions with the P-tRNA.

Its subcellular location is the cytoplasm. The protein operates within protein biosynthesis; polypeptide chain elongation. In terms of biological role, involved in peptide bond synthesis. Alleviates ribosome stalling that occurs when 3 or more consecutive Pro residues or the sequence PPG is present in a protein, possibly by augmenting the peptidyl transferase activity of the ribosome. Modification of Lys-34 is required for alleviation. The polypeptide is Elongation factor P (Methylococcus capsulatus (strain ATCC 33009 / NCIMB 11132 / Bath)).